A 353-amino-acid chain; its full sequence is Photosystem II D2 protein (353 aa).

An N-acetylthreonine modification is found at T2. The residue at position 2 (T2) is a Phosphothreonine. Residues 41 to 61 (CAYFALGGWFTGTTFVTSWYT) traverse the membrane as a helical segment. H118 lines the chlorophyll a pocket. Residues 125-141 (GFMLRQFELARSVQLRP) form a helical membrane-spanning segment. Residues Q130 and N143 each coordinate pheophytin a. Residues 153-166 (VFVSVFLIYPLGQS) form a helical membrane-spanning segment. H198 provides a ligand contact to chlorophyll a. Residues 208-228 (AALLCAIHGATVENTLFEDGD) form a helical membrane-spanning segment. The a plastoquinone site is built by H215 and F262. H215 contributes to the Fe cation binding site. H269 serves as a coordination point for Fe cation. Residues 279–295 (GLWMSALGVVGLALNLR) traverse the membrane as a helical segment.

This sequence belongs to the reaction center PufL/M/PsbA/D family. As to quaternary structure, PSII is composed of 1 copy each of membrane proteins PsbA, PsbB, PsbC, PsbD, PsbE, PsbF, PsbH, PsbI, PsbJ, PsbK, PsbL, PsbM, PsbT, PsbX, PsbY, PsbZ, Psb30/Ycf12, at least 3 peripheral proteins of the oxygen-evolving complex and a large number of cofactors. It forms dimeric complexes. It depends on The D1/D2 heterodimer binds P680, chlorophylls that are the primary electron donor of PSII, and subsequent electron acceptors. It shares a non-heme iron and each subunit binds pheophytin, quinone, additional chlorophylls, carotenoids and lipids. There is also a Cl(-1) ion associated with D1 and D2, which is required for oxygen evolution. The PSII complex binds additional chlorophylls, carotenoids and specific lipids. as a cofactor.

It is found in the plastid. Its subcellular location is the chloroplast thylakoid membrane. The enzyme catalyses 2 a plastoquinone + 4 hnu + 2 H2O = 2 a plastoquinol + O2. Photosystem II (PSII) is a light-driven water:plastoquinone oxidoreductase that uses light energy to abstract electrons from H(2)O, generating O(2) and a proton gradient subsequently used for ATP formation. It consists of a core antenna complex that captures photons, and an electron transfer chain that converts photonic excitation into a charge separation. The D1/D2 (PsbA/PsbD) reaction center heterodimer binds P680, the primary electron donor of PSII as well as several subsequent electron acceptors. D2 is needed for assembly of a stable PSII complex. The chain is Photosystem II D2 protein from Barbarea verna (Land cress).